Here is a 427-residue protein sequence, read N- to C-terminus: Protein TIFY 6a (427 aa).

Over residues 1-25 (MERDFLGAIWRKEEAAGKPEEHSDY) the composition is skewed to basic and acidic residues. Disordered stretches follow at residues 1 to 32 (MERD…GGGA) and 128 to 154 (YGVA…HANP). Pro residues predominate over residues 136-146 (FPSPSPSPRHP). The region spanning 196 to 231 (QNPKVTQMTIFYDGLVNVFDNIPVEKAQELMLLASR) is the Tify domain. Positions 296 to 327 (SFSSSNDSAGPKSGGLPLAVTPLSQASPSQPI) are disordered. Residues 317–327 (PLSQASPSQPI) show a composition bias toward polar residues. The short motif at 343–367 (PQARKASLARFLEKRKERVSSVAPY) is the Jas element. The Nuclear localization signal signature appears at 345 to 352 (ARKASLAR). The tract at residues 361–427 (VSSVAPYPSS…QEPPSTKLQI (67 aa)) is disordered. Polar residues-rich tracts occupy residues 369–402 (SSKS…NNCE) and 411–427 (RNIS…KLQI).

It belongs to the TIFY/JAZ family. As to quaternary structure, interacts with COI1A. Interacts with COI1A and COI1B in a coronatine-dependent manner. Coronatine is an analog of jasmonoyl isoleucine (JA-Ile). Ubiquitinated. Targeted for degradation by the SCF(COI1) E3 ubiquitin ligase-proteasome pathway during jasmonate signaling.

It is found in the nucleus. Its function is as follows. Repressor of jasmonate responses. In Oryza sativa subsp. japonica (Rice), this protein is Protein TIFY 6a.